Here is a 359-residue protein sequence, read N- to C-terminus: Molybdenum import ATP-binding protein ModC (359 aa).

One can recognise an ABC transporter domain in the interval 1–236 (MNTEIKARFR…IDLPAAFADD (236 aa)). 34–41 (GHSGSGKT) lines the ATP pocket. The Mop domain maps to 294 to 359 (QSSILNCVSA…AQIKAVALLA (66 aa)).

The protein belongs to the ABC transporter superfamily. Molybdate importer (TC 3.A.1.8) family. The complex is composed of two ATP-binding proteins (ModC), two transmembrane proteins (ModB) and a solute-binding protein (ModA).

The protein localises to the cell inner membrane. It carries out the reaction molybdate(out) + ATP + H2O = molybdate(in) + ADP + phosphate + H(+). Part of the ABC transporter complex ModABC involved in molybdenum import. Responsible for energy coupling to the transport system. This Dechloromonas aromatica (strain RCB) protein is Molybdenum import ATP-binding protein ModC.